Consider the following 375-residue polypeptide: ATP-sensitive inward rectifier potassium channel 15 (375 aa).

Residues 1-60 (MDAIHLGMSSAPLVKHTNGVGLKAHRPRVMSKSGHSNVRIDKVDGIYLLYLQDLWTTVID) lie on the Cytoplasmic side of the membrane. A helical transmembrane segment spans residues 61-87 (MKWRYKLTLFAATFVMTWFLFGVVYYA). Residues 88–113 (IAFIHGDLQLGESNSNHTPCIMKVDS) are Extracellular-facing. The helical; Pore-forming intramembrane region spans 114–130 (LTGAFLFSLESQTTIGY). A Selectivity filter motif is present at residues 127-132 (TIGYGV). Over 131–139 (GVRSITEEC) the chain is Extracellular. The helical transmembrane segment at 140-165 (PHAIFLLVAQLVITTLIEIFITGTFL) threads the bilayer. Topologically, residues 166–375 (AKIARPKKRA…RSLLLQQSNV (210 aa)) are cytoplasmic.

The protein belongs to the inward rectifier-type potassium channel (TC 1.A.2.1) family. KCNJ15 subfamily. In terms of assembly, can form heteromultimeric channels with Kir5.1/KCNJ16. Interacts with PATJ. As to expression, expressed in the proximal segment of the nephron.

The protein resides in the membrane. Its subcellular location is the cell membrane. It catalyses the reaction K(+)(in) = K(+)(out). Channel activity is regulated by variations of cytosolic pH; reversibly inhibited by acidic pH values. Inhibited by Ba(2+) and Cs(+) in a voltage-dependent manner. Its function is as follows. Inward rectifier potassium channels are characterized by a greater tendency to allow potassium to flow into the cell rather than out of it. Their voltage dependence is regulated by the concentration of extracellular potassium; as external potassium is raised, the voltage range of the channel opening shifts to more positive voltages. The inward rectification is mainly due to the blockage of outward current by internal magnesium. The chain is ATP-sensitive inward rectifier potassium channel 15 (Kcnj15) from Mus musculus (Mouse).